The chain runs to 122 residues: Small ribosomal subunit protein uS13 (122 aa).

The interval 95–122 is disordered; that stretch reads GLPVHGQRTHTNARTRKGPRRGAVGKKK.

The protein belongs to the universal ribosomal protein uS13 family. As to quaternary structure, part of the 30S ribosomal subunit. Forms a loose heterodimer with protein S19. Forms two bridges to the 50S subunit in the 70S ribosome.

In terms of biological role, located at the top of the head of the 30S subunit, it contacts several helices of the 16S rRNA. In the 70S ribosome it contacts the 23S rRNA (bridge B1a) and protein L5 of the 50S subunit (bridge B1b), connecting the 2 subunits; these bridges are implicated in subunit movement. Contacts the tRNAs in the A and P-sites. The protein is Small ribosomal subunit protein uS13 of Desulfovibrio desulfuricans (strain ATCC 27774 / DSM 6949 / MB).